A 512-amino-acid chain; its full sequence is Maturase K (512 aa).

It belongs to the intron maturase 2 family. MatK subfamily.

It localises to the plastid. It is found in the chloroplast. Usually encoded in the trnK tRNA gene intron. Probably assists in splicing its own and other chloroplast group II introns. This is Maturase K from Zantedeschia aethiopica (White calla lily).